A 191-amino-acid polypeptide reads, in one-letter code: Holliday junction branch migration complex subunit RuvA (191 aa).

The segment at 1–64 is domain I; that stretch reads MIRGVRGTLV…EDELALYGFA (64 aa). The domain II stretch occupies residues 65 to 136; that stretch reads TEAELELFLS…ELRGRLPALT (72 aa). The segment at 136–139 is flexible linker; sequence TEVQ. Residues 140–191 are domain III; it reads AGEPIDQELVAALQALGYTAQEARQAATHPEVRRAPSLEERIVAALRQLAPP.

This sequence belongs to the RuvA family. In terms of assembly, homotetramer. Forms an RuvA(8)-RuvB(12)-Holliday junction (HJ) complex. HJ DNA is sandwiched between 2 RuvA tetramers; dsDNA enters through RuvA and exits via RuvB. An RuvB hexamer assembles on each DNA strand where it exits the tetramer. Each RuvB hexamer is contacted by two RuvA subunits (via domain III) on 2 adjacent RuvB subunits; this complex drives branch migration. In the full resolvosome a probable DNA-RuvA(4)-RuvB(12)-RuvC(2) complex forms which resolves the HJ.

The protein localises to the cytoplasm. In terms of biological role, the RuvA-RuvB-RuvC complex processes Holliday junction (HJ) DNA during genetic recombination and DNA repair, while the RuvA-RuvB complex plays an important role in the rescue of blocked DNA replication forks via replication fork reversal (RFR). RuvA specifically binds to HJ cruciform DNA, conferring on it an open structure. The RuvB hexamer acts as an ATP-dependent pump, pulling dsDNA into and through the RuvAB complex. HJ branch migration allows RuvC to scan DNA until it finds its consensus sequence, where it cleaves and resolves the cruciform DNA. The chain is Holliday junction branch migration complex subunit RuvA from Thermomicrobium roseum (strain ATCC 27502 / DSM 5159 / P-2).